We begin with the raw amino-acid sequence, 3313 residues long: Cadherin EGF LAG seven-pass G-type receptor 3 (3313 aa).

Residues 1 to 31 form the signal peptide; that stretch reads MARRPLWWGLPGPSTPLLLLLLFSLFPSSRE. Residues 32–2538 lie on the Extracellular side of the membrane; sequence EMGGGGDQGW…RLEGDLELLA (2507 aa). Disordered stretches follow at residues 148-187 and 205-269; these read LPLDALSPGDSDLRNSSPHPSELLAQPDSPRPVAFQRNGR and EPGH…RMRS. Residues 258–268 show a composition bias toward basic and acidic residues; it reads HESRTAPERMR. 9 consecutive Cadherin domains span residues 317–424, 425–536, 537–642, 643–747, 748–849, 850–952, 953–1058, 1059–1160, and 1161–1257; these read PQYN…APVF, EQAQ…APQF, SEKR…SPIF, VSTP…RPEF, TMKE…RPVF, QSAH…APQF, VASH…APVF, PAEE…SPVL, and NNFQ…VVII. An N-linked (GlcNAc...) asparagine glycan is attached at Asn-623. The N-linked (GlcNAc...) asparagine glycan is linked to Asn-838. N-linked (GlcNAc...) asparagine glycans are attached at residues Asn-1173, Asn-1213, Asn-1308, and Asn-1318. In terms of domain architecture, EGF-like 1; calcium-binding spans 1366–1424; that stretch reads DDNVCLREPCENYMKCVSVLRFDSSAPFLASASTLFRPIQPIAGLRCRCPPGFTGDFCE. 9 disulfide bridges follow: Cys-1370/Cys-1381, Cys-1375/Cys-1412, Cys-1414/Cys-1423, Cys-1430/Cys-1441, Cys-1435/Cys-1450, Cys-1452/Cys-1461, Cys-1470/Cys-1481, Cys-1475/Cys-1491, and Cys-1493/Cys-1504. The EGF-like 2; calcium-binding domain occupies 1426-1462; that stretch reads ELDLCYSNPCRNGGACARREGGYTCVCRPRFTGEDCE. The EGF-like 3; calcium-binding domain maps to 1466 to 1505; the sequence is EAGRCVPGVCRNGGTCTNAPNGGFRCQCPAGGAFEGPRCE. The Laminin G-like 1 domain maps to 1506–1710; that stretch reads VAARSFPPSS…VANNGTTAGC (205 aa). Residues Asn-1640 and Asn-1704 are each glycosylated (N-linked (GlcNAc...) asparagine). Disulfide bonds link Cys-1684–Cys-1710, Cys-1717–Cys-1728, Cys-1722–Cys-1737, and Cys-1739–Cys-1748. Residues 1713–1749 form the EGF-like 4; calcium-binding domain; the sequence is KSHFCASGPCKNGGLCSERWGGFSCDCPVGFGGKDCR. Positions 1753-1935 constitute a Laminin G-like 2 domain; it reads AHPYHFQGNG…SHRINVEPGC (183 aa). Asn-1761 carries N-linked (GlcNAc...) asparagine glycosylation. Intrachain disulfides connect Cys-1906-Cys-1935, Cys-1941-Cys-1952, Cys-1946-Cys-1961, Cys-1963-Cys-1972, Cys-1976-Cys-1987, Cys-1981-Cys-1999, Cys-2001-Cys-2010, Cys-2018-Cys-2031, and Cys-2033-Cys-2043. The region spanning 1937–1972 is the EGF-like 5; calcium-binding domain; sequence VTNPCASGPCPPHANCKDLWQTFSCTCWPGYYGPGC. (3R)-3-hydroxyaspartate is present on Asp-1954. One can recognise an EGF-like 6; calcium-binding domain in the interval 1973-2011; that stretch reads VDACLLNPCQNQGSCRHLQGGPHGYTCDCASGYFGQHCE. Positions 2012 to 2044 constitute an EGF-like 7; calcium-binding domain; it reads HRMDQQCPRGWWGSPTCGPCNCDVHKGFDPNCN. Asn-2044 is a glycosylation site (N-linked (GlcNAc...) asparagine). The EGF-like 8; calcium-binding domain occupies 2046 to 2081; it reads TSGQCHCKEFHYRPRGSDSCLPCDCYPVGSTSRSCA. Intrachain disulfides connect Cys-2050-Cys-2065, Cys-2052-Cys-2068, Cys-2070-Cys-2080, Cys-2089-Cys-2098, and Cys-2101-Cys-2113. Residues 2068–2115 enclose the Laminin EGF-like domain; sequence CDCYPVGSTSRSCAPHSGQCPCRPGALGRQCNSCDSPFAEVTASGCRV. Tyr-2117 is modified (phosphotyrosine). Asn-2173, Asn-2192, Asn-2382, Asn-2472, and Asn-2504 each carry an N-linked (GlcNAc...) asparagine glycan. Residues 2356–2395 are disordered; it reads HTHVLLPSQSPQPSPSEVLPTSSNAENATASGVVSPPAPL. The 165-residue stretch at 2364-2528 folds into the GAIN-B domain; it reads QSPQPSPSEV…GVLMDASPRE (165 aa). The segment covering 2374–2387 has biased composition (polar residues); it reads LPTSSNAENATASG. 2 disulfides stabilise this stretch: Cys-2478-Cys-2510 and Cys-2498-Cys-2512. The interval 2478-2528 is GPS; the sequence is CVQWDPPGPADQHGMWTARDCELVHRNGSHARCRCSRTGTFGVLMDASPRE. A helical membrane pass occupies residues 2539-2559; sequence VFTHVVVAASVTALVLTAAVL. Topologically, residues 2560–2570 are cytoplasmic; that stretch reads LSLRSLKSNVR. Residues 2571 to 2591 form a helical membrane-spanning segment; the sequence is GIHANVAAALGVAELLFLLGI. Over 2592 to 2599 the chain is Extracellular; it reads HRTHNQLL. The chain crosses the membrane as a helical span at residues 2600-2620; it reads CTVVAILLHYFFLSTFAWLLV. Topologically, residues 2621–2641 are cytoplasmic; it reads QGLHLYRMQVEPRNVDRGAMR. Residues 2642–2662 traverse the membrane as a helical segment; it reads FYHALGWGVPAVLLGLAVGLD. Residues 2663 to 2679 are Extracellular-facing; sequence PEGYGNPDFCWISIHEP. A helical transmembrane segment spans residues 2680 to 2700; sequence LIWSFAGPIVLVIVMNGIMFL. Topologically, residues 2701–2724 are cytoplasmic; sequence LAARTSCSTGQREAKKTSVLRTLR. The helical transmembrane segment at 2725-2745 threads the bilayer; that stretch reads SSFLLLLLVSASWLFGLLAVN. Residues 2746–2752 lie on the Extracellular side of the membrane; the sequence is HSVLAFH. A helical membrane pass occupies residues 2753-2773; sequence YLHAGLCGLQGLAVLLLFCVL. Residues 2774-3313 lie on the Cytoplasmic side of the membrane; that stretch reads NADARAAWTP…SEVPRSEGHS (540 aa). Disordered stretches follow at residues 2887–2927 and 2977–3004; these read AGAD…RPLR and SNKDAANNNQPELALTSGDETSLGRAQR. The span at 2889–2899 shows a compositional bias: acidic residues; it reads ADSDSDSDLSL. Basic residues predominate over residues 2918-2927; that stretch reads TRGRFQRPLR. Residue Tyr-3050 is modified to Phosphotyrosine. Disordered stretches follow at residues 3091-3242 and 3255-3313; these read APVL…PSTE and NSSA…EGHS. Ser-3098 carries the phosphoserine modification. Over residues 3102 to 3119 the composition is skewed to basic and acidic residues; sequence SQERLDTAPARLEPRDRG. 2 stretches are compositionally biased toward low complexity: residues 3178-3197 and 3255-3289; these read QRPLSRDPLLPSRPLDSLSR and NSSALSSVQSSSTPSGPHTTATPSATASALGPSTP. Residues 3290-3301 show a composition bias toward polar residues; that stretch reads RSATSHSISELS.

It belongs to the G-protein coupled receptor 2 family. LN-TM7 subfamily. In terms of processing, the iron and 2-oxoglutarate dependent 3-hydroxylation of aspartate and asparagine is (R) stereospecific within EGF domains. In terms of tissue distribution, expressed in the brain. Expressed in cerebellum, olfactory bulb, cerebral cortex, hippocampus and brain stem.

The protein resides in the cell membrane. In terms of biological role, receptor that may have an important role in cell/cell signaling during nervous system formation. In Rattus norvegicus (Rat), this protein is Cadherin EGF LAG seven-pass G-type receptor 3 (Celsr3).